The primary structure comprises 631 residues: Phosphomethylpyrimidine synthase (631 aa).

Residues asparagine 239, methionine 268, tyrosine 297, histidine 333, 353–355, 394–397, and glutamate 433 each bind substrate; these read SRG and DGLR. Zn(2+) is bound at residue histidine 437. Tyrosine 460 serves as a coordination point for substrate. Position 501 (histidine 501) interacts with Zn(2+). [4Fe-4S] cluster-binding residues include cysteine 581, cysteine 584, and cysteine 589.

The protein belongs to the ThiC family. Homodimer. [4Fe-4S] cluster serves as cofactor.

It catalyses the reaction 5-amino-1-(5-phospho-beta-D-ribosyl)imidazole + S-adenosyl-L-methionine = 4-amino-2-methyl-5-(phosphooxymethyl)pyrimidine + CO + 5'-deoxyadenosine + formate + L-methionine + 3 H(+). The protein operates within cofactor biosynthesis; thiamine diphosphate biosynthesis. In terms of biological role, catalyzes the synthesis of the hydroxymethylpyrimidine phosphate (HMP-P) moiety of thiamine from aminoimidazole ribotide (AIR) in a radical S-adenosyl-L-methionine (SAM)-dependent reaction. The protein is Phosphomethylpyrimidine synthase of Salmonella arizonae (strain ATCC BAA-731 / CDC346-86 / RSK2980).